The following is a 119-amino-acid chain: Large ribosomal subunit protein uL18 (119 aa).

This sequence belongs to the universal ribosomal protein uL18 family. As to quaternary structure, part of the 50S ribosomal subunit; part of the 5S rRNA/L5/L18/L25 subcomplex. Contacts the 5S and 23S rRNAs.

This is one of the proteins that bind and probably mediate the attachment of the 5S RNA into the large ribosomal subunit, where it forms part of the central protuberance. The polypeptide is Large ribosomal subunit protein uL18 (Anaeromyxobacter sp. (strain Fw109-5)).